The following is a 543-amino-acid chain: Membrane protein insertase YidC (543 aa).

The helical transmembrane segment at Phe7 to Tyr27 threads the bilayer. A disordered region spans residues Gln30–Ser61. The segment covering Val35–Ser61 has biased composition (polar residues). 4 consecutive transmembrane segments (helical) span residues Phe341–Ile361, Gly421–Leu441, Phe451–Thr471, and Pro499–Ile519.

Belongs to the OXA1/ALB3/YidC family. Type 1 subfamily. As to quaternary structure, interacts with the Sec translocase complex via SecD. Specifically interacts with transmembrane segments of nascent integral membrane proteins during membrane integration.

It localises to the cell inner membrane. Its function is as follows. Required for the insertion and/or proper folding and/or complex formation of integral membrane proteins into the membrane. Involved in integration of membrane proteins that insert both dependently and independently of the Sec translocase complex, as well as at least some lipoproteins. Aids folding of multispanning membrane proteins. The protein is Membrane protein insertase YidC of Pseudoalteromonas atlantica (strain T6c / ATCC BAA-1087).